The primary structure comprises 693 residues: TGF-beta-activated kinase 1 and MAP3K7-binding protein 2 (693 aa).

The CUE domain occupies 8-51 (IDFQVLHDLRQKFPEVPEVVVSRCMLQNNNNLDACCAVLSQEST). A disordered region spans residues 91-130 (GREGSRMNGSRTLTHSISDGQLQGGQSNSELFQQEPQTAP). The segment covering 97-130 (MNGSRTLTHSISDGQLQGGQSNSELFQQEPQTAP) has biased composition (polar residues). R173 carries the post-translational modification Asymmetric dimethylarginine. The tract at residues 219–310 (ITTPGGTTRQ…SGSSQSSAHS (92 aa)) is disordered. Residues 220–231 (TTPGGTTRQTQQ) are compositionally biased toward low complexity. The span at 232-282 (HSGWVSQFNPMNPQQVYQPSQPGPWTTCPASNPLSHTSSQQPNQQGHQTSH) shows a compositional bias: polar residues. The segment covering 286–310 (PISSPTTSQPPTIHSSGSSQSSAHS) has biased composition (low complexity). K329 participates in a covalent cross-link: Glycyl lysine isopeptide (Lys-Gly) (interchain with G-Cter in SUMO). Positions 330-381 (LEPPQRNNSSKLRSSGPRTSSTSSSVNSQTLNRNQPTVYIAASPPNTDELMS) are disordered. Residues 343-359 (SSGPRTSSTSSSVNSQT) are compositionally biased toward low complexity. 4 positions are modified to phosphoserine: S372, S450, S482, and S524. Residues 532-619 (YTQALLVHQK…TKEIDLFQAR (88 aa)) are a coiled coil. K562 is covalently cross-linked (Glycyl lysine isopeptide (Lys-Gly) (interchain with G-Cter in SUMO)). S582 carries the phosphoserine modification. Residue K611 forms a Glycyl lysine isopeptide (Lys-Gly) (interchain with G-Cter in ubiquitin) linkage. The interval 642-663 (PPKPKDQRSIIKTPKTQDTEDD) is disordered. A RanBP2-type zinc finger spans residues 663–693 (DEGAQWNCTACTFLNHPALIRCEQCEMPRHF). Residue C673 is modified to (Microbial infection) S-methylcysteine. An interaction with polyubiquitin region spans residues 675–685 (FLNHPALIRCE).

Interacts with MAP3K7 and TRAF6. Identified in the TRIKA2 complex composed of MAP3K7, TAB1 and TAB2. Binds 'Lys-63'-linked polyubiquitin chains. Interacts with NCOR1 and HDAC3 to form a ternary complex. Interacts (via C-terminal) with NUMBL (via PTB domain). Interacts (via the C-terminus) with DYNC2I2 (via WD domains). Interacts with RBCK1. Interacts with TRIM5. Interacts with TRIM38 (via B30.2/SPRY domain), leading to its translocation to lysosomes and degradation. Interacts with ASB1; this interaction promotes TAB2 stability. Degraded in a lysosome-dependent manner following interaction with TRIM38. In terms of processing, SUMOylated by TRIM60; leading to inhibition of MAPK/NF-kappaB activation and the innate immune response. Post-translationally, ubiquitinated; following IL1 stimulation or TRAF6 overexpression. Ubiquitination involves RBCK1 leading to proteasomal degradation. Ubiquitinated at Lys-611 by TRIM45 leading to proteasomal degradation. Phosphorylated. In terms of processing, (Microbial infection) Methylated at Cys-673 by enteropathogenic E.coli protein NleE or S.flexneri protein OspZ: methylation disrupts zinc-binding and ability to bind 'Lys-63'-linked ubiquitin, leading to NF-kappa-B inactivation. Widely expressed. In the embryo, expressed in the ventricular trabeculae, endothelial cells of the conotruncal cushions of the outflow tract and in the endothelial cells lining the developing aortic valves.

The protein resides in the membrane. It localises to the endosome membrane. It is found in the lysosome membrane. Its subcellular location is the cytoplasm. The protein localises to the cytosol. Functionally, adapter required to activate the JNK and NF-kappa-B signaling pathways through the specific recognition of 'Lys-63'-linked polyubiquitin chains by its RanBP2-type zinc finger (NZF). Acts as an adapter linking MAP3K7/TAK1 and TRAF6 to 'Lys-63'-linked polyubiquitin chains. The RanBP2-type zinc finger (NZF) specifically recognizes Lys-63'-linked polyubiquitin chains unanchored or anchored to the substrate proteins such as RIPK1/RIP1 and RIPK2: this acts as a scaffold to organize a large signaling complex to promote autophosphorylation of MAP3K7/TAK1, and subsequent activation of I-kappa-B-kinase (IKK) core complex by MAP3K7/TAK1. Also recognizes and binds Lys-63'-linked polyubiquitin chains of heterotypic 'Lys-63'-/'Lys-48'-linked branched ubiquitin chains. Regulates the IL1-mediated translocation of NCOR1 out of the nucleus. Involved in heart development. The protein is TGF-beta-activated kinase 1 and MAP3K7-binding protein 2 of Homo sapiens (Human).